A 254-amino-acid polypeptide reads, in one-letter code: Proteasome subunit alpha (254 aa).

Residues 234-254 (EEMLPTPAATEDAPANGDAPS) form a disordered region.

Belongs to the peptidase T1A family. The 20S proteasome core is composed of 14 alpha and 14 beta subunits that assemble into four stacked heptameric rings, resulting in a barrel-shaped structure. The two inner rings, each composed of seven catalytic beta subunits, are sandwiched by two outer rings, each composed of seven alpha subunits. The catalytic chamber with the active sites is on the inside of the barrel. Has a gated structure, the ends of the cylinder being occluded by the N-termini of the alpha-subunits. Is capped by the proteasome-associated ATPase, ARC.

It is found in the cytoplasm. Its pathway is protein degradation; proteasomal Pup-dependent pathway. With respect to regulation, the formation of the proteasomal ATPase ARC-20S proteasome complex, likely via the docking of the C-termini of ARC into the intersubunit pockets in the alpha-rings, may trigger opening of the gate for substrate entry. Interconversion between the open-gate and close-gate conformations leads to a dynamic regulation of the 20S proteasome proteolysis activity. Functionally, component of the proteasome core, a large protease complex with broad specificity involved in protein degradation. This is Proteasome subunit alpha from Rhodococcus erythropolis (strain PR4 / NBRC 100887).